A 2104-amino-acid polypeptide reads, in one-letter code: Myosin type-2 heavy chain 2 (2104 aa).

The Myosin N-terminal SH3-like domain occupies 35-85 (DERTWIWIPDSKESFVKAWIVEDLGEKYRVKLERDGSERIVDGFDAEKVNP). The Myosin motor domain occupies 89–767 (DMVDDMAALT…VLGSLEDRRN (679 aa)). 182–189 (GESGAGKT) serves as a coordination point for ATP. The interval 646 to 660 (LSSLMHQLEATQPHF) is actin-binding. Positions 829-2104 (LGTTQTDEYL…RSNRSPSVLR (1276 aa)) form a coiled coil. 2 disordered regions span residues 1245–1278 (NRSV…DGNN) and 1398–1426 (MEFT…SKRS). The segment covering 1246–1259 (RSVTQHTLDGNSPH) has biased composition (polar residues). Residues 1261-1278 (SFEEKHSGDPLKRIDGNN) are compositionally biased toward basic and acidic residues. The span at 1409 to 1424 (SKISNLPSSQPGSPSK) shows a compositional bias: polar residues. Ser-1421 is modified (phosphoserine).

It belongs to the TRAFAC class myosin-kinesin ATPase superfamily. Myosin family. Binds to cdc4 and rlc1.

Its function is as follows. Stabilizes the F-actin cables forming the F-actin ring that surrounds the nucleus during interphase. May work in conjunction with myo2. The protein is Myosin type-2 heavy chain 2 (myo3) of Schizosaccharomyces pombe (strain 972 / ATCC 24843) (Fission yeast).